A 176-amino-acid chain; its full sequence is tRNA (adenine(37)-N6)-methyltransferase (176 aa).

The TsaA-like domain maps to 1–94 (SFSHIWVQFV…YLPFVEAQPD (94 aa)). Residues histidine 12, 12-13 (HG), arginine 40, leucine 50, and 74-77 (LDGT) contribute to the S-adenosyl-L-methionine site.

It belongs to the tRNA methyltransferase O family.

The catalysed reaction is N(6)-L-threonylcarbamoyladenosine(37) in tRNA + S-adenosyl-L-methionine = N(6)-methyl,N(6)-L-threonylcarbamoyladenosine(37) in tRNA + S-adenosyl-L-homocysteine + H(+). Its function is as follows. S-adenosyl-L-methionine-dependent methyltransferase responsible for the addition of the methyl group in the formation of N6-methyl-N6-threonylcarbamoyladenosine at position 37 (m(6)t(6)A37) of the tRNA anticodon loop of tRNA(Thr)(GGU). The methyl group of m(6)t(6)A37 appears to slightly improve the efficiency of the tRNA decoding ability. Binds to tRNA. This chain is tRNA (adenine(37)-N6)-methyltransferase, found in Eikenella corrodens.